Reading from the N-terminus, the 1788-residue chain is Genome polyprotein (1788 aa).

Residues 1-184 form an interaction with host MAP1LC3A/LC3 region; it reads MMMASKDVVA…LCPLPPIDLR (184 aa). Residues 58 to 68 show a composition bias toward low complexity; it reads GRTTPEPTGTA. The tract at residues 58–86 is disordered; sequence GRTTPEPTGTAGPPPKQQRDRPPRTQEEV. Basic and acidic residues predominate over residues 74–84; the sequence is QQRDRPPRTQE. Residues 185-399 are interaction with NTPase; sequence NMEPASEPTI…ASLLPDFHLQ (215 aa). The tract at residues 302–399 is interaction with NS4; it reads HPTQSWSQQT…ASLLPDFHLQ (98 aa). 2 host ER membrane association regions span residues 319 to 350 and 361 to 399; these read KLELVRDAILAAVNGLVSQPFKNFLGKLKPLN and TFMGVVEMVILLLELFGVFWNPPDVSNFIASLLPDFHLQ. The interval 400–575 is interaction with NS1-2 and NS4 and homooligomerization; sequence GPEDLARDLV…GKTKAAEHLA (176 aa). One can recognise an SF3 helicase domain in the interval 533-698; the sequence is RISMARSALA…EQIRRVSPGD (166 aa). Residue 561–568 participates in ATP binding; sequence GPPGIGKT. Residues 652–757 form an important for mitochondrion targeting region; it reads AIVITTNAPG…AVALTMERQD (106 aa). The segment at 827-833 is functions as endoplasmic reticulum export signal; that stretch reads YSLESDG. A host membrane association region spans residues 866-911; sequence RAVAYASCIQSAITSILQIAGSALVVNRAVKRMFGTRTATLSLEGP. The tract at residues 948-979 is disordered; sequence EEVAHTEIPSATMEGKNKGKNKKGRGRRNNYN. Basic residues predominate over residues 965–975; that stretch reads KGKNKKGRGRR. Residues 988–993 are acidic; it reads DEEYEE. Residue Y991 is modified to O-(5'-phospho-RNA)-tyrosine. An interaction with host EIF4G region spans residues 1083–1099; it reads WADDEREVDYNEKISFE. One can recognise a Peptidase C37 domain in the interval 1100-1280; sequence APPTLWSRVT…QASEGETTLE (181 aa). Catalysis depends on for 3CLpro activity residues H1129, E1153, and C1238. The RdRp catalytic domain occupies 1515 to 1636; that stretch reads KYHFDADYTA…STDIEFDPAK (122 aa). D1519, D1521, D1623, and E1624 together coordinate Mg(2+).

Homodimer. Homooligomer. Interacts with NTPase; this interaction increases the proapoptotic activity of the NTPase and is crucial for the formation of the viral replication complex. Interacts with NS4; this interaction is crucial for the formation of the viral replication complex. Interacts (via N-terminus) with host VAPA. Interacts with host MAP1LC3A/LC3; this interaction does not seem to be linked to host autophagy, but rather plays a role in the formation of viral factories. In terms of assembly, homooligomer. Interacts with NS1-2; this interaction increases the proapoptotic activity of the NTPase and is crucial for the formation of the viral replication complex. Interacts with NS4; this interaction increases the proapoptotic activity of the NTPase. As to quaternary structure, homodimer. Monomer; in solution. Interacts with NTPase; this interaction increases the proapoptotic activity of the NTPase. Interacts with NS1-2; this interaction is crucial for the formation of the viral replication complex. In terms of assembly, monomer. Interacts with the RNA-directed RNA polymerase; this interaction induces the multimerization of the RdRp and enhances its activity. Interacts with host IEF4G1; this interaction plays a role in translation of viral proteins. As to quaternary structure, homohexamer; also forms fibrous hexameric oligomer. Interacts with the viral genome-linked protein; this interaction induces the multimerization of the RdRp and enhances its activity. The cofactor is Mg(2+). Mn(2+) is required as a cofactor. In terms of processing, specific enzymatic cleavages in vivo yield mature proteins. 3CLpro is first autocatalytically cleaved, then processes the whole polyprotein. NS1/2-3 and NS3-4 sites are cleaved rapidly and NS4-5, NS5-6, and NS6-7 sites are processed subsequently and less efficiently. Post-translationally, VPg is uridylylated by the polymerase and is covalently attached to the 5'-end of the polyadenylated genomic and subgenomic RNAs. This uridylylated form acts as a nucleotide-peptide primer for the polymerase.

The protein localises to the host Golgi apparatus membrane. It localises to the host endoplasmic reticulum membrane. The enzyme catalyses a ribonucleoside 5'-triphosphate + H2O = a ribonucleoside 5'-diphosphate + phosphate + H(+). It carries out the reaction Endopeptidase with a preference for cleavage when the P1 position is occupied by Glu-|-Xaa and the P1' position is occupied by Gly-|-Yaa.. It catalyses the reaction RNA(n) + a ribonucleoside 5'-triphosphate = RNA(n+1) + diphosphate. Induces the proliferation of the host smooth ER membranes forming long tubular structures. These remodeled membranes probably form the viral factories that contain the replication complex. May play a role in viral replication by interacting with host VAPA, a vesicle-associated membrane protein that plays a role in SNARE-mediated vesicle fusion. This interaction may target replication complex to intracellular membranes. Its function is as follows. Displays NTPase activity, but no helicase activity. Induces the formation of convoluted membranes derived from the host ER. These remodeled membranes probably form the viral factories that contain the replication complex. Initiates host cell death by targeting the mitochondrial outer membrane, leading to the permeabilization of mitochondria, programmed host cell death and viral egress. Probably plays a role in preventing the assembly of host stress granules. Functionally, probable key protein responsible for the formation of membrane alterations by the virus. Induces the formation of convoluted membranes derived from the host ER. These remodeled membranes probably form the viral factories that contain the replication complex. May play a role in targeting replication complex to intracellular membranes. In terms of biological role, viral genome-linked protein is covalently linked to the 5'-end of the positive-strand, negative-strand genomic RNAs and subgenomic RNA. Acts as a genome-linked replication primer. May recruit ribosome to viral RNA thereby promoting viral proteins translation. Interacts with host translation initiation complex to allow the translation of viral proteins. Induces the formation of aggregates of RNA-directed RNA polymerase in the presence of RNA. Through its interaction with the viral RNA-directed RNA polymerase, plays a crucial role in enhancing the polymerase activity. Processes the polyprotein. 3CLpro-RdRp is first released by autocleavage, then all other proteins are cleaved. May cleave polyadenylate-binding protein thereby inhibiting cellular translation. Its function is as follows. Replicates genomic and antigenomic RNA by recognizing replications specific signals. Also transcribes a subgenomic mRNA by initiating RNA synthesis internally on antigenomic RNA. This sgRNA codes for structural proteins. Catalyzes the covalent attachment VPg with viral RNAs. This chain is Genome polyprotein, found in Southampton virus (strain GI/Human/United Kingdom/Southampton/1991) (SHV).